The following is a 202-amino-acid chain: Small ribosomal subunit protein uS4 (202 aa).

The S4 RNA-binding domain maps to 91–168; that stretch reads SRLSSILYNS…HKVPDYLEVD (78 aa).

It belongs to the universal ribosomal protein uS4 family. As to quaternary structure, part of the 30S ribosomal subunit. Contacts protein S5. The interaction surface between S4 and S5 is involved in control of translational fidelity.

Functionally, one of the primary rRNA binding proteins, it binds directly to 16S rRNA where it nucleates assembly of the body of the 30S subunit. Its function is as follows. With S5 and S12 plays an important role in translational accuracy. The sequence is that of Small ribosomal subunit protein uS4 from Ehrlichia canis (strain Jake).